A 369-amino-acid polypeptide reads, in one-letter code: Lipoyl synthase, mitochondrial (369 aa).

The N-terminal 32 residues, 1–32 (MLTKGVRALAWSPRRYITLDAEAAKPVVAKRR), are a transit peptide targeting the mitochondrion. [4Fe-4S] cluster-binding residues include Cys-106, Cys-111, Cys-117, Cys-136, Cys-140, Cys-143, and Ser-351. Residues 121–340 (NKGSATATIM…KEKALELGFL (220 aa)) enclose the Radical SAM core domain.

This sequence belongs to the radical SAM superfamily. Lipoyl synthase family. [4Fe-4S] cluster serves as cofactor.

It localises to the mitochondrion. The catalysed reaction is [[Fe-S] cluster scaffold protein carrying a second [4Fe-4S](2+) cluster] + N(6)-octanoyl-L-lysyl-[protein] + 2 oxidized [2Fe-2S]-[ferredoxin] + 2 S-adenosyl-L-methionine + 4 H(+) = [[Fe-S] cluster scaffold protein] + N(6)-[(R)-dihydrolipoyl]-L-lysyl-[protein] + 4 Fe(3+) + 2 hydrogen sulfide + 2 5'-deoxyadenosine + 2 L-methionine + 2 reduced [2Fe-2S]-[ferredoxin]. It participates in protein modification; protein lipoylation via endogenous pathway; protein N(6)-(lipoyl)lysine from octanoyl-[acyl-carrier-protein]: step 2/2. Catalyzes the radical-mediated insertion of two sulfur atoms into the C-6 and C-8 positions of the octanoyl moiety bound to the lipoyl domains of lipoate-dependent enzymes, thereby converting the octanoylated domains into lipoylated derivatives. This is Lipoyl synthase, mitochondrial from Eremothecium gossypii (strain ATCC 10895 / CBS 109.51 / FGSC 9923 / NRRL Y-1056) (Yeast).